We begin with the raw amino-acid sequence, 1085 residues long: Kinesin-like protein cut7 (1085 aa).

The disordered stretch occupies residues 1 to 70 (MAPRVAPGGS…TDHALHDENE (70 aa)). The span at 24–37 (PVSTPNSHFRSASN) shows a compositional bias: polar residues. The Kinesin motor domain maps to 72 to 421 (NINVVVRVRG…LEYAARAKSI (350 aa)). 159-166 (GQTGTGKT) is an ATP binding site. 3 coiled-coil regions span residues 436-604 (LIKD…WNLK), 715-740 (ISSELIELQKDMKESYRQLVQELRSL), and 897-955 (LALA…DSIK). Repeats lie at residues 987–998 (DESLCNLETTIE) and 999–1010 (DTSLVKLETTGD). Phosphothreonine; by CDC2 is present on Thr-1011. The interval 1049–1085 (YTSSNQTNEPDVYDKPSNSSRTSLLRSSRSAYSKMKR) is disordered. Residues 1065–1078 (SNSSRTSLLRSSRS) are compositionally biased toward low complexity.

This sequence belongs to the TRAFAC class myosin-kinesin ATPase superfamily. Kinesin family. BimC subfamily.

It localises to the cytoplasm. The protein localises to the cytoskeleton. Its subcellular location is the microtubule organizing center. It is found in the spindle pole body. Its function is as follows. Could be a spindle pole body motor. On transition from G2 to M phase of the cell cycle, the spindle pole body duplicates; the daughter pole bodies seed microtubules which interdigitate to form a short spindle that elongates to span the nucleus at metaphase. Mutations at cut7 block spindle formation. In Schizosaccharomyces pombe (strain 972 / ATCC 24843) (Fission yeast), this protein is Kinesin-like protein cut7 (cut7).